We begin with the raw amino-acid sequence, 1230 residues long: Basic-leucine zipper transcription factor A (1230 aa).

Disordered regions lie at residues 65-108 (LYLS…NIIN), 180-233 (LNGN…QQHQ), 270-310 (QQLK…PSTQ), and 422-578 (HQQN…RKKD). Composition is skewed to low complexity over residues 69–108 (NSSNNTNNNNNNNNNNNNNNNNNNNNNNNNNNNNNNNIIN), 192–233 (NNFS…QQHQ), 270–287 (QQLKQQQPQQHPIQSPQP), 295–310 (PSLQQHQTYSYTPSTQ), and 422–447 (HQQNIQQHQNQNQQQLQLPQPQQQQH). Polar residues-rich tracts occupy residues 448–458 (KSTPPTQNTPP) and 466–475 (TPTLTTNGKG). The span at 476-503 (SKSTPPTTTTTTTTTTSSSSSSSSSSSS) shows a compositional bias: low complexity. The span at 523–537 (PHHHHHHHNNHHHHH) shows a compositional bias: basic residues. Over residues 541–554 (FSDENDEEFIDENE) the composition is skewed to acidic residues. Residues 555 to 618 (DKSKNKSRSS…LGDVMRPDFD (64 aa)) form the bZIP domain. The interval 556–586 (KSKNKSRSSQNIASRNYRQRKKDHISEVEFK) is basic motif. Positions 562–571 (RSSQNIASRN) are enriched in polar residues. A leucine-zipper region spans residues 590–604 (LSLENERLKQENHLL). Residues 728–753 (LKIDMELRTERDQLDREIKELFLKKI) adopt a coiled-coil conformation. 2 disordered regions span residues 772-869 (TFNS…EHNK) and 1025-1230 (NYTN…TPNI). 2 stretches are compositionally biased toward low complexity: residues 774–803 (NSESDYPSSPSSASNSSNSPPTSSPTIITP) and 810–831 (NNQNNQNNNQMINSNSNNSNNN). Basic residues predominate over residues 832-845 (SHHHHHHHHSHLHG). The segment covering 1025-1042 (NYTNSPLITSSPSQLTPN) has biased composition (polar residues). 2 stretches are compositionally biased toward low complexity: residues 1052–1146 (NNNN…NNGN) and 1153–1193 (QALH…SPSS).

It belongs to the bZIP family. Binds DNA as a dimer. Heterodimerizes with dimB; in vitro. Also able to form homodimer; in vitro.

Its subcellular location is the nucleus. In terms of biological role, transcriptional regulator involved in DIF-1 signaling. DIF-1 (Differentiation Inducing Factor-1) is a signal molecule involved in the differentiation of pstO (prestalk-O) cells. Functions both as an activator of prestalk gene expression and a repressor of prespore gene expression. The polypeptide is Basic-leucine zipper transcription factor A (dimA) (Dictyostelium discoideum (Social amoeba)).